The chain runs to 122 residues: Large ribosomal subunit protein uL14 (122 aa).

It belongs to the universal ribosomal protein uL14 family. Part of the 50S ribosomal subunit. Forms a cluster with proteins L3 and L19. In the 70S ribosome, L14 and L19 interact and together make contacts with the 16S rRNA in bridges B5 and B8.

Its function is as follows. Binds to 23S rRNA. Forms part of two intersubunit bridges in the 70S ribosome. The sequence is that of Large ribosomal subunit protein uL14 from Rubrobacter xylanophilus (strain DSM 9941 / JCM 11954 / NBRC 16129 / PRD-1).